Reading from the N-terminus, the 486-residue chain is Cardiolipin synthase A (486 aa).

The next 2 helical transmembrane spans lie at 3-23 (TVYT…IAGV) and 38-58 (MAWL…YLAV). PLD phosphodiesterase domains lie at 219 to 246 (MDLR…VDPR) and 399 to 426 (EGGL…DMRS). Catalysis depends on residues His-224, Lys-226, Asp-231, His-404, Lys-406, and Asp-411.

The protein belongs to the phospholipase D family. Cardiolipin synthase subfamily. ClsA sub-subfamily.

Its subcellular location is the cell inner membrane. It catalyses the reaction 2 a 1,2-diacyl-sn-glycero-3-phospho-(1'-sn-glycerol) = a cardiolipin + glycerol. Functionally, catalyzes the reversible phosphatidyl group transfer from one phosphatidylglycerol molecule to another to form cardiolipin (CL) (diphosphatidylglycerol) and glycerol. This is Cardiolipin synthase A from Shigella dysenteriae serotype 1 (strain Sd197).